The chain runs to 467 residues: FK506-binding protein 4 (467 aa).

Disordered regions lie at residues 64–163 (KATG…GDDD) and 208–357 (GNFV…KPTS). 3 stretches are compositionally biased toward acidic residues: residues 71–80 (DDDDEEEDEY), 147–163 (SDEE…GDDD), and 213–254 (PEDD…DELD). 2 stretches are compositionally biased toward basic and acidic residues: residues 271–287 (APKL…RPAE) and 312–332 (QKVE…DKKV). Residues 381 to 467 (GDRVGMRYIG…IFDVKLLEIK (87 aa)) form the PPIase FKBP-type domain.

The protein belongs to the FKBP-type PPIase family. FKBP3/4 subfamily. Binds to histones H3 and H4.

The protein resides in the nucleus. It carries out the reaction [protein]-peptidylproline (omega=180) = [protein]-peptidylproline (omega=0). Inhibited by both FK506 and rapamycin. PPIase that acts as a histone chaperone. Histone proline isomerase that increases the rate of cis-trans isomerization at prolines on the histone H3 N-terminal tail. Proline isomerization influences H3 methylation thereby regulating gene expression. This chain is FK506-binding protein 4 (fkr-4), found in Neurospora crassa (strain ATCC 24698 / 74-OR23-1A / CBS 708.71 / DSM 1257 / FGSC 987).